We begin with the raw amino-acid sequence, 1066 residues long: Bifunctional cytochrome P450/NADPH--P450 reductase (1066 aa).

Residues 1–480 (MAESVPIPEP…LAGNGATSSS (480 aa)) form a cytochrome P450 region. Cys-407 contacts heme. The tract at residues 481–1066 (THNIKAAANL…NERFATDVFD (586 aa)) is NADPH-P-450 reductase. Positions 500–641 (MAIFYGSNSG…DFEAWEDIVL (142 aa)) constitute a Flavodoxin-like domain. Residues 506–511 (SNSGTC), 554–557 (SYEG), Cys-588, and Thr-596 each bind FMN. In terms of domain architecture, FAD-binding FR-type spans 676 to 904 (QDVEEALVVA…RASSEAFHLP (229 aa)).

This sequence in the N-terminal section; belongs to the cytochrome P450 family. Requires FAD as cofactor. FMN is required as a cofactor. The cofactor is heme.

It is found in the membrane. The catalysed reaction is an organic molecule + reduced [NADPH--hemoprotein reductase] + O2 = an alcohol + oxidized [NADPH--hemoprotein reductase] + H2O + H(+). It catalyses the reaction 2 oxidized [cytochrome P450] + NADPH = 2 reduced [cytochrome P450] + NADP(+) + H(+). Its activity is regulated as follows. Stimulated NADPH--cytochrome reductase activity in the presence of substrate. Inhibited by fatty acid substrates longer than 13 carbons and the degree of inhibition increases with increasing chain length. Its function is as follows. Functions as a fatty acid monooxygenase. Catalyzes hydroxylation of fatty acids at omega-1, omega-2 and omega-3 positions. Shows activity toward fatty acids with a chain length of 9-18 carbons with optimum chain lengths of 12-14 carbons (lauric, tridecylic and myristic acids). Can also use shorter saturated fatty acids with a chain length of 9 or 10 carbons as substrates. Also displays a NADPH-dependent reductase activity in the C-terminal domain, which allows electron transfer from NADPH to the heme iron of the cytochrome P450 N-terminal domain. The protein is Bifunctional cytochrome P450/NADPH--P450 reductase of Fusarium oxysporum (Fusarium vascular wilt).